Here is a 495-residue protein sequence, read N- to C-terminus: MKYNDLRDFVSQLEKLGELKRITAEVDPHLEMTEICDRTLRAGGPALLFENPKGYDMPVLANLFGTPKRVALGMGQDDVAALREIGKLLAFLKEPDPPKGFKDAIEKLPLFRQVMRMSPKVLRSAPCQDVVIEKDKVDLYQIPVQHCWPGDAGPLVTWPLVITRGPNKERQNLGIYRQQVIGRNRLIMRWLSHRGGALDYQEFRKANPDKPYPVAVALGADPATILGAVTPVPDTLSEYAFAGLLRGSRTELVNAGLSDLQVPASAEIVLEGFIYPDDMAPEGPFGDHTGYYNEVDQFPVFTVERITHRRDPIYHSTYTGRPPDEPAILGVALNEVFIPILQKQFPEIVDFYLPPEGCSYRLAVVTMKKQYPGHAKRVMMGVWSFLRQFMYTKFVIVTDDDVNARNWEDVIWAITTRMDPARDTTLVENTPIDYLDFASPVSGLGSKMGMDATNKWPGETDREWGTAIAMTDEVKQRVDDIWDSLGIEIPGARPD.

N172 is a binding site for Mn(2+). Residues 175–177 (IYR), 189–191 (RWL), and 194–195 (RG) contribute to the prenylated FMN site. Residue E238 participates in Mn(2+) binding. Residue D287 is the Proton donor of the active site.

The protein belongs to the UbiD family. As to quaternary structure, homohexamer. It depends on prenylated FMN as a cofactor. Mn(2+) serves as cofactor.

It is found in the cell membrane. It carries out the reaction a 4-hydroxy-3-(all-trans-polyprenyl)benzoate + H(+) = a 2-(all-trans-polyprenyl)phenol + CO2. Its pathway is cofactor biosynthesis; ubiquinone biosynthesis. In terms of biological role, catalyzes the decarboxylation of 3-octaprenyl-4-hydroxy benzoate to 2-octaprenylphenol, an intermediate step in ubiquinone biosynthesis. In Marinobacter nauticus (strain ATCC 700491 / DSM 11845 / VT8) (Marinobacter aquaeolei), this protein is 3-octaprenyl-4-hydroxybenzoate carboxy-lyase.